We begin with the raw amino-acid sequence, 358 residues long: tRNA-specific 2-thiouridylase MnmA (358 aa).

ATP-binding positions include A6–S13 and L32. Catalysis depends on C101, which acts as the Nucleophile. C101 and C193 are oxidised to a cystine. ATP is bound at residue G125. The segment at K143 to Q145 is interaction with tRNA. C193 functions as the Cysteine persulfide intermediate in the catalytic mechanism.

The protein belongs to the MnmA/TRMU family.

It localises to the cytoplasm. It carries out the reaction S-sulfanyl-L-cysteinyl-[protein] + uridine(34) in tRNA + AH2 + ATP = 2-thiouridine(34) in tRNA + L-cysteinyl-[protein] + A + AMP + diphosphate + H(+). In terms of biological role, catalyzes the 2-thiolation of uridine at the wobble position (U34) of tRNA, leading to the formation of s(2)U34. In Mycobacterium leprae (strain Br4923), this protein is tRNA-specific 2-thiouridylase MnmA.